The chain runs to 226 residues: UPF0758 protein SPT_1135 (226 aa).

The MPN domain maps to 103–225 (SILSSQKLAK…YFSYREKTDL (123 aa)). The Zn(2+) site is built by His-174, His-176, and Asp-187. The JAMM motif signature appears at 174–187 (HNHPSGAVAPSQND).

It belongs to the UPF0758 family.

This is UPF0758 protein SPT_1135 from Streptococcus pneumoniae (strain Taiwan19F-14).